The chain runs to 246 residues: 5-oxoprolinase subunit A (246 aa).

Belongs to the LamB/PxpA family. As to quaternary structure, forms a complex composed of PxpA, PxpB and PxpC.

The catalysed reaction is 5-oxo-L-proline + ATP + 2 H2O = L-glutamate + ADP + phosphate + H(+). Its function is as follows. Catalyzes the cleavage of 5-oxoproline to form L-glutamate coupled to the hydrolysis of ATP to ADP and inorganic phosphate. The chain is 5-oxoprolinase subunit A from Cupriavidus pinatubonensis (strain JMP 134 / LMG 1197) (Cupriavidus necator (strain JMP 134)).